We begin with the raw amino-acid sequence, 226 residues long: Enolase-phosphatase E1 (226 aa).

This sequence belongs to the HAD-like hydrolase superfamily. MasA/MtnC family. In terms of assembly, monomer. Mg(2+) is required as a cofactor.

The enzyme catalyses 5-methylsulfanyl-2,3-dioxopentyl phosphate + H2O = 1,2-dihydroxy-5-(methylsulfanyl)pent-1-en-3-one + phosphate. Its pathway is amino-acid biosynthesis; L-methionine biosynthesis via salvage pathway; L-methionine from S-methyl-5-thio-alpha-D-ribose 1-phosphate: step 3/6. It participates in amino-acid biosynthesis; L-methionine biosynthesis via salvage pathway; L-methionine from S-methyl-5-thio-alpha-D-ribose 1-phosphate: step 4/6. Bifunctional enzyme that catalyzes the enolization of 2,3-diketo-5-methylthiopentyl-1-phosphate (DK-MTP-1-P) into the intermediate 2-hydroxy-3-keto-5-methylthiopentenyl-1-phosphate (HK-MTPenyl-1-P), which is then dephosphorylated to form the acireductone 1,2-dihydroxy-3-keto-5-methylthiopentene (DHK-MTPene). This is Enolase-phosphatase E1 from Shewanella amazonensis (strain ATCC BAA-1098 / SB2B).